We begin with the raw amino-acid sequence, 299 residues long: F-actin-capping protein subunit alpha-3 (299 aa).

Ser290 is modified (phosphoserine).

It belongs to the F-actin-capping protein alpha subunit family. In terms of assembly, component of the F-actin capping complex, composed of a heterodimer of an alpha and a beta subunit. Component of the WASH complex, composed of F-actin-capping protein subunit alpha (CAPZA1, CAPZA2 or CAPZA3), F-actin-capping protein subunit beta (CAPZB), WASH (WASHC1, WASH2P, WASH3P, WASH4P, WASH5P or WASH6P), WASHC2 (WASHC2A or WASHC2C), WASHC3, WASHC4 and WASHC5. Expressed exclusively in testis and sperm. Highest expression is found in the neck region of ejaculated sperm with lower levels found in the tail and postacrosome region.

Its subcellular location is the cytoplasm. It localises to the cytoskeleton. Functionally, F-actin-capping proteins bind in a Ca(2+)-independent manner to the fast growing ends of actin filaments (barbed end) thereby blocking the exchange of subunits at these ends. Unlike other capping proteins (such as gelsolin and severin), these proteins do not sever actin filaments. May play a role in the morphogenesis of spermatid. This Homo sapiens (Human) protein is F-actin-capping protein subunit alpha-3 (CAPZA3).